The chain runs to 341 residues: uncharacterized protein (341 aa).

58–82 serves as a coordination point for NADP(+); that stretch reads ITGGSSGIGAAAAKKIAEAGGTVVL. Ser194 contacts substrate. The Proton acceptor role is filled by Tyr207. Residues 309–329 form a disordered region; it reads DSSAAKGSESQTDTSELDKRS.

The protein belongs to the short-chain dehydrogenases/reductases (SDR) family.

This is an uncharacterized protein from Mycobacterium bovis (strain ATCC BAA-935 / AF2122/97).